The sequence spans 169 residues: Peptide deformylase 1 (169 aa).

The Fe cation site is built by Cys-93 and His-135. The active site involves Glu-136. His-139 lines the Fe cation pocket.

It belongs to the polypeptide deformylase family. Fe(2+) serves as cofactor.

It carries out the reaction N-terminal N-formyl-L-methionyl-[peptide] + H2O = N-terminal L-methionyl-[peptide] + formate. In terms of biological role, removes the formyl group from the N-terminal Met of newly synthesized proteins. Requires at least a dipeptide for an efficient rate of reaction. N-terminal L-methionine is a prerequisite for activity but the enzyme has broad specificity at other positions. This is Peptide deformylase 1 from Corynebacterium efficiens (strain DSM 44549 / YS-314 / AJ 12310 / JCM 11189 / NBRC 100395).